The following is a 238-amino-acid chain: Gem-associated protein 8 (238 aa).

The disordered stretch occupies residues 66-127 (AGHPWDSQGQ…LESDSDDEVE (62 aa)). Polar residues-rich tracts occupy residues 72–82 (SQGQHMAQQES) and 96–108 (LRNS…STRG). The segment covering 113 to 127 (CEEEELESDSDDEVE) has biased composition (acidic residues). Ser-122 carries the post-translational modification Phosphoserine. Residues 131 to 164 (SNMEITEELRQYFAQTERHREERRRQQQLDAERL) adopt a coiled-coil conformation.

In terms of assembly, part of the core SMN complex that contains SMN1, GEMIN2/SIP1, DDX20/GEMIN3, GEMIN4, GEMIN5, GEMIN6, GEMIN7, GEMIN8 and STRAP/UNRIP. Part of the SMN-Sm complex that contains SMN1, GEMIN2/SIP1, DDX20/GEMIN3, GEMIN4, GEMIN5, GEMIN6, GEMIN7, GEMIN8, STRAP/UNRIP and the Sm proteins SNRPB, SNRPD1, SNRPD2, SNRPD3, SNRPE, SNRPF and SNRPG. Interacts with GEMIN6; the interaction is direct. Interacts with GEMIN7; the interaction is direct. Interacts with SMN1; the interaction is direct. Interacts with GEMIN4; the interaction is direct. As to expression, widely expressed in embryonic tissues (at protein level).

The protein resides in the nucleus. It localises to the gem. Its subcellular location is the cytoplasm. Functionally, the SMN complex catalyzes the assembly of small nuclear ribonucleoproteins (snRNPs), the building blocks of the spliceosome, and thereby plays an important role in the splicing of cellular pre-mRNAs. Most spliceosomal snRNPs contain a common set of Sm proteins SNRPB, SNRPD1, SNRPD2, SNRPD3, SNRPE, SNRPF and SNRPG that assemble in a heptameric protein ring on the Sm site of the small nuclear RNA to form the core snRNP (Sm core). In the cytosol, the Sm proteins SNRPD1, SNRPD2, SNRPE, SNRPF and SNRPG are trapped in an inactive 6S pICln-Sm complex by the chaperone CLNS1A that controls the assembly of the core snRNP. To assemble core snRNPs, the SMN complex accepts the trapped 5Sm proteins from CLNS1A forming an intermediate. Binding of snRNA inside 5Sm triggers eviction of the SMN complex, thereby allowing binding of SNRPD3 and SNRPB to complete assembly of the core snRNP. In Mus musculus (Mouse), this protein is Gem-associated protein 8 (Gemin8).